The primary structure comprises 62 residues: Sperm protamine P1 (62 aa).

The interval 1–62 is disordered; the sequence is MARYRHSRSR…RYSRRRRRRY (62 aa).

It belongs to the protamine P1 family. In terms of tissue distribution, testis.

The protein resides in the nucleus. The protein localises to the chromosome. Functionally, protamines substitute for histones in the chromatin of sperm during the haploid phase of spermatogenesis. They compact sperm DNA into a highly condensed, stable and inactive complex. The polypeptide is Sperm protamine P1 (PRM1) (Notamacropus eugenii (Tammar wallaby)).